Reading from the N-terminus, the 105-residue chain is Large ribosomal subunit protein eL36 (105 aa).

Position 62 is an N6-acetyllysine (Lys-62).

This sequence belongs to the eukaryotic ribosomal protein eL36 family. Component of the large ribosomal subunit.

The protein resides in the cytoplasm. It is found in the cytosol. Its function is as follows. Component of the large ribosomal subunit. The ribosome is a large ribonucleoprotein complex responsible for the synthesis of proteins in the cell. This chain is Large ribosomal subunit protein eL36 (RPL36), found in Bos taurus (Bovine).